The chain runs to 170 residues: Translationally-controlled tumor protein homolog (170 aa).

The TCTP domain maps to 1–170 (MIIYKCIISG…FKDGLLAEKC (170 aa)).

This sequence belongs to the TCTP family.

The protein localises to the cytoplasm. Functionally, involved in calcium binding and microtubule stabilization. The chain is Translationally-controlled tumor protein homolog (tpt1) from Lateolabrax japonicus (Japanese sea perch).